Consider the following 85-residue polypeptide: Large ribosomal subunit protein bL27 (85 aa).

A disordered region spans residues 1–20 (MATKKAGGSTRNGRDSEAKR).

The protein belongs to the bacterial ribosomal protein bL27 family.

This Haemophilus influenzae (strain ATCC 51907 / DSM 11121 / KW20 / Rd) protein is Large ribosomal subunit protein bL27.